The following is a 292-amino-acid chain: Protease HtpX homolog (292 aa).

The next 2 helical transmembrane spans lie at 9–29 (TGVLMAFLTGLLMAIGYVLGN) and 31–51 (TGMMFAFMFALVMNFFSYWYS). His-133 contacts Zn(2+). Residue Glu-134 is part of the active site. His-137 is a binding site for Zn(2+). 2 helical membrane passes run 148 to 168 (LAAVMAGAIMMVARWAGWMLW) and 185 to 205 (LGAILLIVLAPIAAMLIQMAI). Glu-210 provides a ligand contact to Zn(2+).

The protein belongs to the peptidase M48B family. It depends on Zn(2+) as a cofactor.

The protein localises to the cell membrane. In Thermococcus sibiricus (strain DSM 12597 / MM 739), this protein is Protease HtpX homolog.